The following is a 157-amino-acid chain: MAEKNERAIKVVAENRKARFNYAIDDTIEVGIALTGTEVKSIRNGKTTIAESYADARGSEIWLINANIPEYLQANRFNHEPKRPRKLLLHRKQINKLIGAVEREGMTLIPLKLYFNERGRAKLQLALAKGKKLHDKRETEKKRDWSREKGRLLRSRG.

The tract at residues 132–157 (KLHDKRETEKKRDWSREKGRLLRSRG) is disordered. Positions 135–151 (DKRETEKKRDWSREKGR) are enriched in basic and acidic residues.

This sequence belongs to the SmpB family.

The protein localises to the cytoplasm. In terms of biological role, required for rescue of stalled ribosomes mediated by trans-translation. Binds to transfer-messenger RNA (tmRNA), required for stable association of tmRNA with ribosomes. tmRNA and SmpB together mimic tRNA shape, replacing the anticodon stem-loop with SmpB. tmRNA is encoded by the ssrA gene; the 2 termini fold to resemble tRNA(Ala) and it encodes a 'tag peptide', a short internal open reading frame. During trans-translation Ala-aminoacylated tmRNA acts like a tRNA, entering the A-site of stalled ribosomes, displacing the stalled mRNA. The ribosome then switches to translate the ORF on the tmRNA; the nascent peptide is terminated with the 'tag peptide' encoded by the tmRNA and targeted for degradation. The ribosome is freed to recommence translation, which seems to be the essential function of trans-translation. The chain is SsrA-binding protein from Rhodopseudomonas palustris (strain ATCC BAA-98 / CGA009).